A 127-amino-acid chain; its full sequence is Fluoride-specific ion channel FluC (127 aa).

4 helical membrane-spanning segments follow: residues 4–24 (IIYIFIGGGMGSVTRYLTQIA), 34–54 (FPFPWGTFAVNIIGSLLIGFF), 65–85 (FELRLFLTVGFCGGFTTFSTL), and 97–117 (FYGIFTFYVFISILLGLLAVL). Residues glycine 77 and threonine 80 each coordinate Na(+).

Belongs to the fluoride channel Fluc/FEX (TC 1.A.43) family.

Its subcellular location is the cell inner membrane. The enzyme catalyses fluoride(in) = fluoride(out). Its activity is regulated as follows. Na(+) is not transported, but it plays an essential structural role and its presence is essential for fluoride channel function. Fluoride-specific ion channel. Important for reducing fluoride concentration in the cell, thus reducing its toxicity. The polypeptide is Fluoride-specific ion channel FluC (Bacteroides fragilis (strain ATCC 25285 / DSM 2151 / CCUG 4856 / JCM 11019 / LMG 10263 / NCTC 9343 / Onslow / VPI 2553 / EN-2)).